Reading from the N-terminus, the 350-residue chain is MSSTAASSTVGGGGSSEISGVKKTSKRPKYSRFTQQELPACKPILTPRWVILTFLVAGVVFIPLGVICLFASQGVVEIVDRYDTDCIPTSSRNNMVAYIQGEGDKICKRTITVTKAMKHPVYVYYQLENFYQNHRRYVKSRNDAQLRSPKEEHDVKTCAPEDNVGGEPIVPCGLVAWSLFNDTYSFSRNSQQLLVNKKGISWKSDRENKFGKNVFPKNFQKGAPIGGGTLNISKPLSEQEDLIVWMRTAALPTFRKLYGKIETDLHAGDTITVLLQNNYNTYSFNGQKKLVLSTTSWLGGRNDFLGIAYLTVGSICLFLAVTFAVLYLVKPRQLGDPSYLSWNRSAGGLQ.

Residues 1-23 (MSSTAASSTVGGGGSSEISGVKK) are disordered. Ser-2 carries the N-acetylserine modification. Residues 50-70 (VILTFLVAGVVFIPLGVICLF) traverse the membrane as a helical segment. N-linked (GlcNAc...) asparagine glycans are attached at residues Asn-181 and Asn-231. A helical membrane pass occupies residues 304 to 324 (FLGIAYLTVGSICLFLAVTFA).

Belongs to the CDC50/LEM3 family. In terms of assembly, interacts with ALA2 and ALA3 in a heterologous system. Expressed in roots, leaves, stems, flowers and siliques.

The protein localises to the golgi apparatus membrane. Its subcellular location is the prevacuolar compartment membrane. It localises to the endoplasmic reticulum membrane. Functionally, required for the lipid transport activity of the ALA/ALIS P4-ATPase complex. This is ALA-interacting subunit 5 (ALIS5) from Arabidopsis thaliana (Mouse-ear cress).